The sequence spans 193 residues: Acyl carrier protein phosphodiesterase (193 aa).

It belongs to the AcpH family.

The catalysed reaction is holo-[ACP] + H2O = apo-[ACP] + (R)-4'-phosphopantetheine + H(+). Its function is as follows. Converts holo-ACP to apo-ACP by hydrolytic cleavage of the phosphopantetheine prosthetic group from ACP. This chain is Acyl carrier protein phosphodiesterase, found in Escherichia coli O7:K1 (strain IAI39 / ExPEC).